The sequence spans 442 residues: Divalent metal cation transporter MntH (442 aa).

Transmembrane regions (helical) follow at residues methionine 29 to tryptophan 49, threonine 62 to valine 82, phenylalanine 106 to glycine 126, phenylalanine 135 to phenylalanine 155, alanine 166 to serine 186, methionine 209 to histidine 229, phenylalanine 258 to phenylalanine 278, leucine 295 to alanine 315, leucine 347 to asparagine 367, leucine 372 to valine 392, and leucine 413 to leucine 433.

This sequence belongs to the NRAMP family.

The protein resides in the cell inner membrane. Functionally, h(+)-stimulated, divalent metal cation uptake system. The polypeptide is Divalent metal cation transporter MntH (Nostoc sp. (strain PCC 7120 / SAG 25.82 / UTEX 2576)).